The chain runs to 644 residues: Transmembrane 9 superfamily member 9 (644 aa).

Residues 1 to 27 (MEFYRSSRRLQILGSVILLLSIHVAHS) form the signal peptide. Over 28–281 (FYLPGVAPQD…YLLMSDNQIH (254 aa)) the chain is Lumenal. A helical membrane pass occupies residues 282–302 (WFSIVNSLMIVLFLSGMVAMI). Residues 303 to 351 (MLRTLYRDISRYNELETQEEAQEETGWKLVHGDVFRPPANSDLLCVYVG) lie on the Cytoplasmic side of the membrane. A helical membrane pass occupies residues 352–372 (TGVQCLGMVLVTMIFAMLGFL). Topologically, residues 373-377 (SPSNR) are lumenal. The helical transmembrane segment at 378 to 398 (GGLMTAMLLLWVFMGLFAGYA) threads the bilayer. Residues 399 to 418 (SSRLYKMFKGTEWKRIAFRT) are Cytoplasmic-facing. A helical transmembrane segment spans residues 419-439 (AFLFPAVVSAIFFVLNALIWG). Over 440-451 (QKSSGAVPFGTM) the chain is Lumenal. A helical membrane pass occupies residues 452–472 (FALIFLWFGISVPLVFVGAYL). Over 473–501 (GFKKPPLDDPVKTNKIPRQIPEQAWYMNP) the chain is Cytoplasmic. A helical transmembrane segment spans residues 502 to 522 (IFSILIGGILPFGAVFIELFF). Residues 523–534 (ILTSIWLNQFYY) lie on the Lumenal side of the membrane. Residues 535 to 555 (IFGFLFLVFVILMVTCAEITI) traverse the membrane as a helical segment. Over 556–573 (VLCYFQLCSEDYLWWWRS) the chain is Cytoplasmic. The helical transmembrane segment at 574-594 (YLTSGSSAVYLFLYAAFYFFT) threads the bilayer. The Lumenal segment spans residues 595-600 (KLQITK). The helical transmembrane segment at 601 to 621 (LVSAMLYFGYMLIASYAFFVL) threads the bilayer. Over 622 to 644 (TGTIGFYACLWFTRLIYSSVKID) the chain is Cytoplasmic. The short motif at 633–638 (FTRLIY) is the Endoplasmic reticulum export signal element. A Golgi retention signal motif is present at residues 642 to 644 (KID).

Belongs to the nonaspanin (TM9SF) (TC 9.A.2) family.

It localises to the endosome membrane. Its subcellular location is the golgi apparatus membrane. The sequence is that of Transmembrane 9 superfamily member 9 from Arabidopsis thaliana (Mouse-ear cress).